We begin with the raw amino-acid sequence, 481 residues long: Rhamnogalacturonan I rhamnosyltransferase 4 (481 aa).

Residues 33–55 (VWFFRVCSCILVWTCLIQLFWHS) form a helical; Signal-anchor for type II membrane protein membrane-spanning segment. Residues N85 and N118 are each glycosylated (N-linked (GlcNAc...) asparagine). 258–260 (HLR) is a binding site for substrate. N-linked (GlcNAc...) asparagine glycans are attached at residues N372 and N432.

This sequence belongs to the glycosyltransferase GT106 family.

It is found in the golgi apparatus membrane. It catalyses the reaction alpha-D-galacturonosyl-[(1-&gt;2)-alpha-L-rhamnosyl-(1-&gt;4)-alpha-D-galacturonosyl](n) + UDP-beta-L-rhamnose = [(1-&gt;2)-alpha-L-rhamnosyl-(1-&gt;4)-alpha-D-galacturonosyl](n+1) + UDP + H(+). It functions in the pathway glycan metabolism; pectin biosynthesis. Its function is as follows. Glycosyltransferase involved in the formation of rhamnogalacturonan I (RG-I) oligosaccharides in the seed coat mucilage, which is a specialized cell wall with abundant RG-I. Transfers the rhamnose residue from UDP-beta-L-rhamnose to RG-I oligosaccharides. The polypeptide is Rhamnogalacturonan I rhamnosyltransferase 4 (Arabidopsis thaliana (Mouse-ear cress)).